The sequence spans 256 residues: Ribonuclease 3 (256 aa).

Residues 3 to 125 form the RNase III domain; it reads LDALQQRLGY…IVGAVFLDAG (123 aa). E38 contributes to the Mg(2+) binding site. D42 is a catalytic residue. 2 residues coordinate Mg(2+): D111 and E114. E114 is a catalytic residue. In terms of domain architecture, DRBM spans 152–222; sequence DAKTLLQEYL…AKLALDEVQK (71 aa). A disordered region spans residues 229–256; the sequence is KRSRAERTGKTRKQPQPQDPQLSLRLKE.

It belongs to the ribonuclease III family. In terms of assembly, homodimer. Mg(2+) serves as cofactor.

The protein resides in the cytoplasm. It catalyses the reaction Endonucleolytic cleavage to 5'-phosphomonoester.. In terms of biological role, digests double-stranded RNA. Involved in the processing of primary rRNA transcript to yield the immediate precursors to the large and small rRNAs (23S and 16S). Processes some mRNAs, and tRNAs when they are encoded in the rRNA operon. Processes pre-crRNA and tracrRNA of type II CRISPR loci if present in the organism. This is Ribonuclease 3 from Cupriavidus taiwanensis (strain DSM 17343 / BCRC 17206 / CCUG 44338 / CIP 107171 / LMG 19424 / R1) (Ralstonia taiwanensis (strain LMG 19424)).